The chain runs to 83 residues: Exodeoxyribonuclease 7 small subunit (83 aa).

It belongs to the XseB family. As to quaternary structure, heterooligomer composed of large and small subunits.

The protein localises to the cytoplasm. The enzyme catalyses Exonucleolytic cleavage in either 5'- to 3'- or 3'- to 5'-direction to yield nucleoside 5'-phosphates.. Functionally, bidirectionally degrades single-stranded DNA into large acid-insoluble oligonucleotides, which are then degraded further into small acid-soluble oligonucleotides. This is Exodeoxyribonuclease 7 small subunit from Bradyrhizobium diazoefficiens (strain JCM 10833 / BCRC 13528 / IAM 13628 / NBRC 14792 / USDA 110).